Consider the following 461-residue polypeptide: DNA polymerase delta subunit 3 (461 aa).

Disordered stretches follow at residues 148-229 (VAQA…SAKG), 249-380 (VPGQ…KRVL), and 399-461 (YESE…CQKK). Residues 155-172 (ARSSSQTPSDTSAVSTPP) show a composition bias toward polar residues. The span at 205–214 (DANKEPKAKE) shows a compositional bias: basic and acidic residues. Positions 215-228 (APSVSAASSKPSAK) are enriched in low complexity. The span at 279 to 304 (KPGRKTEPAKIQQKDKKSKMKRMDKS) shows a compositional bias: basic and acidic residues. The span at 371 to 380 (GKKRKRKRVL) shows a compositional bias: basic residues. A compositionally biased stretch (basic and acidic residues) spans 427–436 (VKKEPKEERK). The short motif at 451-458 (QISIMGFC) is the PIP-box element.

Component of both the DNA polymerase delta and DNA polymerase zeta complexes. The tetrameric DNA polymerase delta complex (Pol-delta4), which consists of POLD1/p125, POLD2/p50, POLD3/p66/p68 and POLD4/p12, with POLD1 bearing DNA polymerase and 3' to 5' proofreading exonuclease activities.

The protein resides in the cytoplasm. The protein localises to the nucleus. Its function is as follows. Accessory component of both the DNA polymerase delta complex and the DNA polymerase zeta complex. As a component of the trimeric and tetrameric DNA polymerase delta complexes (Pol-delta3 and Pol-delta4, respectively), plays a role in high fidelity genome replication, including in lagging strand synthesis, and repair. Required for optimal Pol-delta activity. Stabilizes the Pol-delta complex and plays a major role in Pol-delta stimulation by PCNA. Pol-delta3 and Pol-delta4 are characterized by the absence or the presence of POLD4. They exhibit differences in catalytic activity. Most notably, Pol-delta3 shows higher proofreading activity than Pol-delta4. Although both Pol-delta3 and Pol-delta4 process Okazaki fragments in vitro, Pol-delta3 may also be better suited to fulfill this task, exhibiting near-absence of strand displacement activity compared to Pol-delta4 and stalling on encounter with the 5'-blocking oligonucleotides. Pol-delta3 idling process may avoid the formation of a gap, while maintaining a nick that can be readily ligated. Along with DNA polymerase kappa, DNA polymerase delta carries out approximately half of nucleotide excision repair (NER) synthesis following UV irradiation. In this context, POLD3, along with PCNA and RFC1-replication factor C complex, is required to recruit POLD1, the catalytic subunit of the polymerase delta complex, to DNA damage sites. Under conditions of DNA replication stress, required for the repair of broken replication forks through break-induced replication (BIR). Involved in the translesion synthesis (TLS) of templates carrying O6-methylguanine or abasic sites performed by Pol-delta4, independently of DNA polymerase zeta (REV3L) or eta (POLH). Facilitates abasic site bypass by DNA polymerase delta by promoting extension from the nucleotide inserted opposite the lesion. Also involved in TLS, as a component of the tetrameric DNA polymerase zeta complex. Along with POLD2, dramatically increases the efficiency and processivity of DNA synthesis of the DNA polymerase zeta complex compared to the minimal zeta complex, consisting of only REV3L and REV7. The sequence is that of DNA polymerase delta subunit 3 (POLD3) from Gallus gallus (Chicken).